We begin with the raw amino-acid sequence, 263 residues long: (2Z,6E)-farnesyl diphosphate synthase (263 aa).

Asp-40 is a catalytic residue. Residue Asp-40 coordinates Mg(2+). Residues 41-44 (GNRR), Trp-45, and 86-88 (STE) contribute to the substrate site. Asn-89 (proton acceptor) is an active-site residue. Residues Arg-92, Arg-212, and 218 to 220 (RLS) each bind substrate. Position 231 (Glu-231) interacts with Mg(2+).

It belongs to the UPP synthase family. Z-FPP synthase subfamily. Homodimer. Requires Mg(2+) as cofactor.

The protein localises to the cell membrane. The enzyme catalyses isopentenyl diphosphate + (2E)-geranyl diphosphate = (2Z,6E)-farnesyl diphosphate + diphosphate. Catalyzes the condensation of only one isopentenyl pyrophosphate (IPP) unit in the cis configuration to E-geranyl diphosphate (E-GPP) generating the 15 carbon product (2Z,6E)-farnesyl diphosphate (Z-FPP or EZ-FPP). Z-FPP is the precursor of decaprenyl diphosphate, which has a central role in the biosynthesis of the mycobacterial cell wall. The sequence is that of (2Z,6E)-farnesyl diphosphate synthase (uppS) from Mycolicibacterium smegmatis (strain ATCC 700084 / mc(2)155) (Mycobacterium smegmatis).